The primary structure comprises 495 residues: Cobyric acid synthase (495 aa).

Residues 262 to 445 (CLEIAVIRLP…LHGLFDNHRW (184 aa)) enclose the GATase cobBQ-type domain. Catalysis depends on cysteine 340, which acts as the Nucleophile. The active site involves histidine 437.

This sequence belongs to the CobB/CobQ family. CobQ subfamily.

The protein operates within cofactor biosynthesis; adenosylcobalamin biosynthesis. In terms of biological role, catalyzes amidations at positions B, D, E, and G on adenosylcobyrinic A,C-diamide. NH(2) groups are provided by glutamine, and one molecule of ATP is hydrogenolyzed for each amidation. The protein is Cobyric acid synthase of Synechococcus sp. (strain JA-3-3Ab) (Cyanobacteria bacterium Yellowstone A-Prime).